We begin with the raw amino-acid sequence, 267 residues long: Undecaprenyl-diphosphatase (267 aa).

The next 8 helical transmembrane spans lie at 1 to 21 (MTYF…FLPI), 39 to 59 (QGLA…VIYF), 83 to 103 (SNLA…GLLF), 111 to 131 (LRSA…LWWV), 149 to 169 (ALFL…RSGI), 189 to 209 (FLMS…KLAM), 218 to 238 (LLST…HFFL), and 246 to 266 (MMPF…WLAL).

It belongs to the UppP family.

Its subcellular location is the cell inner membrane. The enzyme catalyses di-trans,octa-cis-undecaprenyl diphosphate + H2O = di-trans,octa-cis-undecaprenyl phosphate + phosphate + H(+). Catalyzes the dephosphorylation of undecaprenyl diphosphate (UPP). Confers resistance to bacitracin. This Aliivibrio fischeri (strain MJ11) (Vibrio fischeri) protein is Undecaprenyl-diphosphatase.